An 85-amino-acid chain; its full sequence is Large ribosomal subunit protein bL27 (85 aa).

This sequence belongs to the bacterial ribosomal protein bL27 family.

This chain is Large ribosomal subunit protein bL27, found in Xylella fastidiosa (strain Temecula1 / ATCC 700964).